Reading from the N-terminus, the 215-residue chain is Large ribosomal subunit protein uL3 (215 aa).

Gln151 carries the N5-methylglutamine modification.

Belongs to the universal ribosomal protein uL3 family. Part of the 50S ribosomal subunit. Forms a cluster with proteins L14 and L19. Post-translationally, methylated by PrmB.

One of the primary rRNA binding proteins, it binds directly near the 3'-end of the 23S rRNA, where it nucleates assembly of the 50S subunit. The sequence is that of Large ribosomal subunit protein uL3 from Rickettsia massiliae (strain Mtu5).